The chain runs to 561 residues: uncharacterized protein (561 aa).

A coiled-coil region spans residues Asp-187–Ile-217.

This is an uncharacterized protein from Dictyostelium discoideum (Social amoeba).